Here is a 72-residue protein sequence, read N- to C-terminus: Nod factor export ATP-binding protein I (72 aa).

The protein belongs to the ABC transporter superfamily. Lipooligosaccharide exporter (TC 3.A.1.102) family. As to quaternary structure, the complex is composed of two ATP-binding proteins (NodI) and two transmembrane proteins (NodJ).

The protein localises to the cell inner membrane. Part of the ABC transporter complex NodIJ involved in the export of the nodulation factors (Nod factors), the bacterial signal molecules that induce symbiosis and subsequent nodulation induction. Nod factors are LCO (lipo-chitin oligosaccharide), a modified beta-1,4-linked N-acetylglucosamine oligosaccharide. This subunit is responsible for energy coupling to the transport system. In Rhizobium leguminosarum bv. trifolii, this protein is Nod factor export ATP-binding protein I.